A 133-amino-acid polypeptide reads, in one-letter code: U6 snRNA-associated Sm-like protein LSm1 (133 aa).

The Sm domain maps to 5–80 (PGTASLIEDI…VVLLGEIDLE (76 aa)). Ser-123 carries the phosphoserine modification. Phosphothreonine is present on Thr-129.

It belongs to the snRNP Sm proteins family. As to quaternary structure, interacts with SLBP; interaction with SLBP occurs when histone mRNA is being rapidly degraded during the S phase. LSm subunits form a heteromer with a donut shape.

It localises to the cytoplasm. The protein resides in the P-body. In terms of biological role, plays a role in the degradation of histone mRNAs, the only eukaryotic mRNAs that are not polyadenylated. Probably also part of an LSm subunits-containing complex involved in the general process of mRNA degradation. The polypeptide is U6 snRNA-associated Sm-like protein LSm1 (Lsm1) (Mus musculus (Mouse)).